The sequence spans 176 residues: Ribosome maturation factor RimM (176 aa).

The PRC barrel domain maps to 102–175 (KNDYYWNDII…TDKKFILVQW (74 aa)).

It belongs to the RimM family. As to quaternary structure, binds ribosomal protein uS19.

The protein localises to the cytoplasm. In terms of biological role, an accessory protein needed during the final step in the assembly of 30S ribosomal subunit, possibly for assembly of the head region. Essential for efficient processing of 16S rRNA. May be needed both before and after RbfA during the maturation of 16S rRNA. It has affinity for free ribosomal 30S subunits but not for 70S ribosomes. In Buchnera aphidicola subsp. Acyrthosiphon pisum (strain APS) (Acyrthosiphon pisum symbiotic bacterium), this protein is Ribosome maturation factor RimM.